The chain runs to 63 residues: Large ribosomal subunit protein bL35 (63 aa).

This sequence belongs to the bacterial ribosomal protein bL35 family.

This is Large ribosomal subunit protein bL35 from Campylobacter curvus (strain 525.92).